The sequence spans 184 residues: Bacterial microcompartment shell protein PduT (184 aa).

BMC domains are found at residues 4-86 (AIGI…PAIS) and 96-182 (AVGI…RQMV). Cys38 serves as a coordination point for [4Fe-4S] cluster.

This sequence belongs to the bacterial microcompartments protein family. In terms of assembly, homotrimerizes to form a pseudohexamer with a large central pore, which is probably the binding site for the [4Fe-4S] center. Interacts with PduS. Originally suggested to be a homotetramer; this is incorrect. It depends on [4Fe-4S] cluster as a cofactor.

The protein resides in the bacterial microcompartment. Its pathway is polyol metabolism; 1,2-propanediol degradation. A minor shell protein of the bacterial microcompartment (BMC) dedicated to 1,2-propanediol (1,2-PD) degradation. Overexpression of this protein leads to cells with either deposits or having lamina-like structures in the cytoplasm. Not absolutely required to make artificial BMCs. May selectively transport specific metabolites. Its function is as follows. Expression of a cosmid containing the full 21-gene pdu operon in E.coli allows E.coli to grow on 1,2-propanediol (1,2-PD) with the appearance of bacterial microcompartments (BMC) in its cytoplasm. In terms of biological role, the 1,2-PD-specific bacterial microcompartment (BMC) concentrates low levels of 1,2-PD catabolic enzymes, concentrates volatile reaction intermediates thus enhancing pathway flux and keeps the level of toxic, mutagenic propionaldehyde low. This is Bacterial microcompartment shell protein PduT from Citrobacter freundii.